The following is a 489-amino-acid chain: Protein nucleotidyltransferase YdiU (489 aa).

ATP is bound by residues Gly-88, Gly-90, Arg-91, Lys-111, Asp-123, Gly-124, Arg-174, and Arg-181. Residue Asp-250 is the Proton acceptor of the active site. Residues Asn-251 and Asp-260 each coordinate Mg(2+). Asp-260 is a binding site for ATP.

Belongs to the SELO family. Mg(2+) is required as a cofactor. It depends on Mn(2+) as a cofactor.

The catalysed reaction is L-seryl-[protein] + ATP = 3-O-(5'-adenylyl)-L-seryl-[protein] + diphosphate. The enzyme catalyses L-threonyl-[protein] + ATP = 3-O-(5'-adenylyl)-L-threonyl-[protein] + diphosphate. It catalyses the reaction L-tyrosyl-[protein] + ATP = O-(5'-adenylyl)-L-tyrosyl-[protein] + diphosphate. It carries out the reaction L-histidyl-[protein] + UTP = N(tele)-(5'-uridylyl)-L-histidyl-[protein] + diphosphate. The catalysed reaction is L-seryl-[protein] + UTP = O-(5'-uridylyl)-L-seryl-[protein] + diphosphate. The enzyme catalyses L-tyrosyl-[protein] + UTP = O-(5'-uridylyl)-L-tyrosyl-[protein] + diphosphate. Its function is as follows. Nucleotidyltransferase involved in the post-translational modification of proteins. It can catalyze the addition of adenosine monophosphate (AMP) or uridine monophosphate (UMP) to a protein, resulting in modifications known as AMPylation and UMPylation. This chain is Protein nucleotidyltransferase YdiU, found in Vibrio parahaemolyticus serotype O3:K6 (strain RIMD 2210633).